Here is a 209-residue protein sequence, read N- to C-terminus: HTLV-1 basic zipper factor (209 aa).

Residues 48–162 (DGLLSLEEES…SARKEKMQEL (115 aa)) are disordered. Basic and acidic residues-rich tracts occupy residues 70–87 (APPR…AEEK) and 94–114 (REKE…EEKA). A Nuclear localization signal 1 motif is present at residues 87–92 (KRKRKK). 2 consecutive short sequence motifs (nuclear localization signal) follow at residues 116-120 (RRRRA) and 137-141 (RRERK). Basic and acidic residues predominate over residues 122-160 (KKAADVARRKQEEQERRERKWRQGAEKAKQHSARKEKMQ).

It belongs to the HTLV-1 HBZ protein family. As to quaternary structure, interacts with host ATF4; this interaction inhibits viral RNA transcriptional activation by preventing ATF4 binding to Tax-responsive elements. Interacts with host CREB1; this interaction inhibits host CREB1 transcriptional activity. Interacts with host JUN, JUNB and JUND. Interacts with host EP300.

It is found in the host nucleus. In terms of biological role, contributes to the regulation of viral RNA transcription by interacting with host proteins involved in transcriptional activation such as ATF4, or CREB1, and by inhibiting their activity. Additionally, HBZ suppresses host NF-kappa-B-driven transcription mediated by host RELA as well as transcription of some classical NF-kappa-B target genes, including IL8, IL2RA, IRF4, VCAM1, and VEGFA. This chain is HTLV-1 basic zipper factor (HBZ), found in Homo sapiens (Human).